Consider the following 455-residue polypeptide: Chromosomal replication initiator protein DnaA (455 aa).

Residues 1–75 (MDTNNNIEKE…EILSQNKVGM (75 aa)) form a domain I, interacts with DnaA modulators region. The domain II stretch occupies residues 75-106 (MHLAHSVDVRIEVAPKIQINAQANINYKAIKT). The tract at residues 107–321 (SVKDSYTFEN…GAIIKISVNA (215 aa)) is domain III, AAA+ region. ATP contacts are provided by Gly151, Gly153, Lys154, and Thr155. The domain IV, binds dsDNA stretch occupies residues 322–455 (NLMNAPIDLN…DKKTAFNSSE (134 aa)).

Belongs to the DnaA family. In terms of assembly, oligomerizes as a right-handed, spiral filament on DNA at oriC.

The protein localises to the cytoplasm. Its function is as follows. Plays an essential role in the initiation and regulation of chromosomal replication. ATP-DnaA binds to the origin of replication (oriC) to initiate formation of the DNA replication initiation complex once per cell cycle. Binds the DnaA box (a 9 base pair repeat at the origin) and separates the double-stranded (ds)DNA. Forms a right-handed helical filament on oriC DNA; dsDNA binds to the exterior of the filament while single-stranded (ss)DNA is stabiized in the filament's interior. The ATP-DnaA-oriC complex binds and stabilizes one strand of the AT-rich DNA unwinding element (DUE), permitting loading of DNA polymerase. After initiation quickly degrades to an ADP-DnaA complex that is not apt for DNA replication. Binds acidic phospholipids. This is Chromosomal replication initiator protein DnaA from Helicobacter pylori (strain P12).